An 82-amino-acid chain; its full sequence is Putative Fe(2+) transport protein A (82 aa).

Belongs to the FeoA family.

Might be involved in Fe(2+) ion uptake. The sequence is that of Putative Fe(2+) transport protein A from Methanocaldococcus jannaschii (strain ATCC 43067 / DSM 2661 / JAL-1 / JCM 10045 / NBRC 100440) (Methanococcus jannaschii).